The primary structure comprises 367 residues: 3-dehydroquinate synthase (367 aa).

NAD(+)-binding positions include 69–74 (DGEAFK), 103–107 (GVIGD), 127–128 (TT), Lys140, and Lys149. Positions 182, 245, and 262 each coordinate Zn(2+).

This sequence belongs to the sugar phosphate cyclases superfamily. Dehydroquinate synthase family. The cofactor is Co(2+). Requires Zn(2+) as cofactor. It depends on NAD(+) as a cofactor.

The protein localises to the cytoplasm. The enzyme catalyses 7-phospho-2-dehydro-3-deoxy-D-arabino-heptonate = 3-dehydroquinate + phosphate. It participates in metabolic intermediate biosynthesis; chorismate biosynthesis; chorismate from D-erythrose 4-phosphate and phosphoenolpyruvate: step 2/7. In terms of biological role, catalyzes the conversion of 3-deoxy-D-arabino-heptulosonate 7-phosphate (DAHP) to dehydroquinate (DHQ). The sequence is that of 3-dehydroquinate synthase from Pseudomonas syringae pv. syringae (strain B728a).